Consider the following 401-residue polypeptide: Probable aspartate/prephenate aminotransferase (401 aa).

L-aspartate contacts are provided by Gly39, Trp125, and Asn175. The residue at position 239 (Lys239) is an N6-(pyridoxal phosphate)lysine. L-aspartate is bound at residue Arg375.

It belongs to the class-I pyridoxal-phosphate-dependent aminotransferase family. In terms of assembly, homodimer. It depends on pyridoxal 5'-phosphate as a cofactor.

The protein localises to the cytoplasm. The enzyme catalyses L-aspartate + 2-oxoglutarate = oxaloacetate + L-glutamate. It carries out the reaction L-arogenate + 2-oxoglutarate = prephenate + L-glutamate. Catalyzes the reversible conversion of aspartate and 2-oxoglutarate to glutamate and oxaloacetate. Can also transaminate prephenate in the presence of glutamate. The polypeptide is Probable aspartate/prephenate aminotransferase (aatA) (Rickettsia conorii (strain ATCC VR-613 / Malish 7)).